Here is a 143-residue protein sequence, read N- to C-terminus: Glutaredoxin-2 (143 aa).

Residues 1–30 (METNFSFDSNLIVIIIITLFATRIIAKRFL) constitute a mitochondrion transit peptide. S37 carries the phosphoserine modification. The Glutaredoxin domain occupies 41-143 (VAHVKDLIGQ…LAEILKPVFQ (103 aa)). 58 to 63 (KTYCPY) lines the glutathione pocket. C61 is subject to S-glutathionyl cysteine; alternate. C61 and C64 form a disulfide bridge. At S91 the chain carries Phosphoserine. Glutathione contacts are provided by residues V109 and 122–123 (NS).

This sequence belongs to the glutaredoxin family.

The protein localises to the cytoplasm. The protein resides in the mitochondrion. The enzyme catalyses 2 glutathione + H2O2 = glutathione disulfide + 2 H2O. It catalyses the reaction 1-chloro-2,4-dinitrobenzene + glutathione = 2,4-dinitrophenyl-S-glutathione + chloride + H(+). It carries out the reaction RX + glutathione = an S-substituted glutathione + a halide anion + H(+). Its function is as follows. Component of the glutathione system which performs several activities such as glutathione-dependent oxidoreductase, glutathione peroxidase and glutathione S-transferase (GST) activity. The disulfide bond functions as an electron carrier in the glutathione-dependent synthesis of deoxyribonucleotides by the enzyme ribonucleotide reductase. In addition, it is also involved in reducing cytosolic protein- and non-protein-disulfides in a coupled system with glutathione reductase. Required for resistance to reactive oxygen species (ROS) by directly reducing hydroperoxides and for the detoxification of ROS-mediated damage. GRX2 is more active as an oxidoreductase than GRX1. Responsible for the S-glutathionylation of DHBP synthase. This chain is Glutaredoxin-2 (GRX2), found in Saccharomyces cerevisiae (strain ATCC 204508 / S288c) (Baker's yeast).